Consider the following 677-residue polypeptide: Protein asunder (677 aa).

Residues 515-540 are a coiled coil; the sequence is RLKLSKAKDQYRLLYRELEQLIQLNS. Low complexity predominate over residues 578 to 598; that stretch reads ESPLSPERLEPTSSSSSNSLL. Residues 578–604 form a disordered region; the sequence is ESPLSPERLEPTSSSSSNSLLKARKRR. The short motif at 598-604 is the Nuclear localization signal (NLS) element; that stretch reads LKARKRR.

The protein belongs to the Integrator subunit 13 family. Belongs to the multiprotein complex Integrator, at least composed of IntS1, IntS2, IntS3, IntS4, omd/IntS5, IntS6, defl/IntS7, IntS8, IntS9, IntS10, IntS11, IntS12, asun/IntS13, IntS14 and IntS15. The core complex associates with protein phosphatase 2A subunits mts/PP2A and Pp2A-29B, to form the Integrator-PP2A (INTAC) complex. In terms of processing, phosphorylated.

The protein localises to the nucleus. It is found in the cytoplasm. It localises to the perinuclear region. Component of the integrator complex, a multiprotein complex that terminates RNA polymerase II (Pol II) transcription in the promoter-proximal region of genes. The integrator complex provides a quality checkpoint during transcription elongation by driving premature transcription termination of transcripts that are unfavorably configured for transcriptional elongation: the complex terminates transcription by (1) catalyzing dephosphorylation of the C-terminal domain (CTD) of Pol II subunit Polr2A/Rbp1 and Spt5, and (2) degrading the exiting nascent RNA transcript via endonuclease activity. The integrator complex is also involved in the 3'-end processing of the U7 snRNA, and also the spliceosomal snRNAs U1, U2, U4 and U5. This is Protein asunder (asun) from Drosophila willistoni (Fruit fly).